A 97-amino-acid polypeptide reads, in one-letter code: Mapk-regulated corepressor-interacting protein 1 (97 aa).

A disordered region spans residues 1–30 (MTSSPVSRVVYNGKRNSSHRSPPNSSEIFT). Phosphoserine is present on S21. T30 is subject to Phosphothreonine. Y41 is modified (phosphotyrosine). Residues 77–97 (TFRPIDLSDLKRRNTQDAKKS) are disordered. Positions 80–84 (PIDLS) match the PXDLS motif motif. A compositionally biased stretch (basic and acidic residues) spans 82 to 97 (DLSDLKRRNTQDAKKS).

It belongs to the MCRIP family. Interacts (unphosphorylated form, via the PXDLS motif) with CTBP1, competitively inhibiting CTBP-ZEB1 interaction. Interacts with CTBP2. Interacts with MCRIP2. Interacts with DDX6. Post-translationally, phosphorylation by MAPK3/1 (ERK1/2) regulates MCRIP1 binding to CTBP(s).

It is found in the nucleus. The protein localises to the cytoplasm. The protein resides in the stress granule. The phosphorylation status of MCRIP1 functions as a molecular switch to regulate epithelial-mesenchymal transition. Unphosphorylated MCRIP1 binds to and inhibits the transcriptional corepressor CTBP(s). When phosphorylated by MAPK/ERK, MCRIP1 releases CTBP(s) resulting in transcriptional silencing of the E-cadherin gene and induction of epithelial-mesenchymal transition. In Bos taurus (Bovine), this protein is Mapk-regulated corepressor-interacting protein 1 (MCRIP1).